Reading from the N-terminus, the 120-residue chain is Large ribosomal subunit protein uL18 (120 aa).

The span at 1-10 (MKLNRVESTR) shows a compositional bias: basic and acidic residues. Residues 1–26 (MKLNRVESTRSRHRRVRRKVGGTGDR) form a disordered region. Positions 11–20 (SRHRRVRRKV) are enriched in basic residues.

It belongs to the universal ribosomal protein uL18 family. Part of the 50S ribosomal subunit; part of the 5S rRNA/L5/L18/L25 subcomplex. Contacts the 5S and 23S rRNAs.

Its function is as follows. This is one of the proteins that bind and probably mediate the attachment of the 5S RNA into the large ribosomal subunit, where it forms part of the central protuberance. The chain is Large ribosomal subunit protein uL18 from Cyanothece sp. (strain PCC 7425 / ATCC 29141).